Reading from the N-terminus, the 258-residue chain is Ribonuclease HII (258 aa).

Residues 1 to 20 (MRVAPSGGPPHHHAMIRATP) form a disordered region. Over residues 10–20 (PHHHAMIRATP) the composition is skewed to basic residues. The 189-residue stretch at 48–236 (WPVAGCDEVG…VVAARERHRA (189 aa)) folds into the RNase H type-2 domain. The a divalent metal cation site is built by Asp54, Glu55, and Asp145.

It belongs to the RNase HII family. Mn(2+) is required as a cofactor. Mg(2+) serves as cofactor.

It localises to the cytoplasm. The enzyme catalyses Endonucleolytic cleavage to 5'-phosphomonoester.. Endonuclease that specifically degrades the RNA of RNA-DNA hybrids. The protein is Ribonuclease HII of Nitrobacter winogradskyi (strain ATCC 25391 / DSM 10237 / CIP 104748 / NCIMB 11846 / Nb-255).